A 218-amino-acid polypeptide reads, in one-letter code: Dynein axonemal assembly factor 6 (218 aa).

The disordered stretch occupies residues 66–103 (MGPGNIGPPKAKESKAIPEPRSDESENIWNPEEVPEGA). Positions 75 to 89 (KAKESKAIPEPRSDE) are enriched in basic and acidic residues.

This sequence belongs to the PIH1 family. In terms of assembly, interacts with HSPA1A/B, HSP90AA1 and DNAI2. Interacts with DNAAF2 and DNAAF4. As to expression, specifically expressed in testis. Detected in pachytene spermatocytes from 5 weeks of age and in pachytene and diplotene spermatocytes of adult mice. Not detected in spermatids or mature sperm.

Its subcellular location is the cytoplasm. The protein resides in the golgi apparatus. It localises to the trans-Golgi network. Functionally, plays a role in cytoplasmic pre-assembly of axonemal dynein. This Mus musculus (Mouse) protein is Dynein axonemal assembly factor 6.